We begin with the raw amino-acid sequence, 318 residues long: Transaldolase (318 aa).

Residue Lys132 is the Schiff-base intermediate with substrate of the active site.

This sequence belongs to the transaldolase family. Type 1 subfamily. Homodimer.

Its subcellular location is the cytoplasm. It carries out the reaction D-sedoheptulose 7-phosphate + D-glyceraldehyde 3-phosphate = D-erythrose 4-phosphate + beta-D-fructose 6-phosphate. It functions in the pathway carbohydrate degradation; pentose phosphate pathway; D-glyceraldehyde 3-phosphate and beta-D-fructose 6-phosphate from D-ribose 5-phosphate and D-xylulose 5-phosphate (non-oxidative stage): step 2/3. Functionally, transaldolase is important for the balance of metabolites in the pentose-phosphate pathway. The chain is Transaldolase from Allorhizobium ampelinum (strain ATCC BAA-846 / DSM 112012 / S4) (Agrobacterium vitis (strain S4)).